The sequence spans 310 residues: Probable L,D-transpeptidase ErfK/SrfK (310 aa).

The signal sequence occupies residues 1-21 (MRRVNILCSFALLFASHTSLA). The L,D-TPase catalytic domain maps to 96–231 (KGIVVNVAEM…VPVGTRVQII (136 aa)). His191 acts as the Proton donor/acceptor in catalysis. The active-site Nucleophile is Cys207.

The protein belongs to the YkuD family. In terms of assembly, interacts with DsbG.

Its subcellular location is the periplasm. It participates in cell wall biogenesis; peptidoglycan biosynthesis. Functionally, responsible, at least in part, for anchoring of the major outer membrane lipoprotein (Lpp, also known as the Braun lipoprotein) to the peptidoglycan via a meso-diaminopimelyl-L-Lys- bond on the terminal residue of Lpp. This Escherichia coli (strain K12) protein is Probable L,D-transpeptidase ErfK/SrfK (erfK).